A 1401-amino-acid chain; its full sequence is Kinesin-like protein KIF27 (1401 aa).

The Kinesin motor domain maps to 5-341 (PVKVAVRIRP…LKYANRARNI (337 aa)). 84-91 (GQTGSGKT) lines the ATP pocket. Coiled-coil stretches lie at residues 352–413 (ESDR…GYQC) and 489–557 (LAAD…KLNL). Phosphoserine occurs at positions 643, 646, 672, 675, and 704. The interval 643 to 662 (SDNSDDEESEGQEKSGTRCR) is disordered. Coiled-coil stretches lie at residues 705-886 (QELN…IQLK), 916-1070 (DHLQ…AAIE), 1118-1154 (NKVV…LESA), and 1190-1219 (EGIM…TSRD). Position 999 is a phosphoserine (S999). Basic and acidic residues predominate over residues 1259 to 1280 (EELKWASRPESMKLSGREREMD). The disordered stretch occupies residues 1259 to 1332 (EELKWASRPE…TETDDNQFTK (74 aa)). The span at 1281-1292 (SSASSLRTQPNP) shows a compositional bias: polar residues. S1367 and S1389 each carry phosphoserine.

The protein belongs to the TRAFAC class myosin-kinesin ATPase superfamily. Kinesin family. KIF27 subfamily. Interacts with STK36. Testis, pancreatic islet, germ cell tumors and Jurkat T-cells.

The protein resides in the cytoplasm. It is found in the cytoskeleton. The protein localises to the cell projection. Its subcellular location is the cilium. Plays an essential role in motile ciliogenesis. This is Kinesin-like protein KIF27 (KIF27) from Homo sapiens (Human).